The chain runs to 544 residues: Chaperonin GroEL (544 aa).

Residues 29–32 (TLGP), 86–90 (DGTTT), Gly413, 476–478 (NAA), and Asp492 contribute to the ATP site.

It belongs to the chaperonin (HSP60) family. In terms of assembly, forms a cylinder of 14 subunits composed of two heptameric rings stacked back-to-back. Interacts with the co-chaperonin GroES.

The protein resides in the cytoplasm. The enzyme catalyses ATP + H2O + a folded polypeptide = ADP + phosphate + an unfolded polypeptide.. Functionally, together with its co-chaperonin GroES, plays an essential role in assisting protein folding. The GroEL-GroES system forms a nano-cage that allows encapsulation of the non-native substrate proteins and provides a physical environment optimized to promote and accelerate protein folding. The chain is Chaperonin GroEL from Bacillus anthracis (strain A0248).